A 642-amino-acid polypeptide reads, in one-letter code: Threonine--tRNA ligase (642 aa).

The TGS domain maps to 1-61 (MPIITLPDGS…EQDSQLAIIT (61 aa)). Residues 243 to 534 (DHRKIGKQLD…LTEEYAGFFP (292 aa)) are catalytic. 3 residues coordinate Zn(2+): Cys334, His385, and His511.

The protein belongs to the class-II aminoacyl-tRNA synthetase family. As to quaternary structure, homodimer. Zn(2+) serves as cofactor.

It localises to the cytoplasm. The catalysed reaction is tRNA(Thr) + L-threonine + ATP = L-threonyl-tRNA(Thr) + AMP + diphosphate + H(+). Its function is as follows. Catalyzes the attachment of threonine to tRNA(Thr) in a two-step reaction: L-threonine is first activated by ATP to form Thr-AMP and then transferred to the acceptor end of tRNA(Thr). Also edits incorrectly charged L-seryl-tRNA(Thr). The chain is Threonine--tRNA ligase from Proteus mirabilis (strain HI4320).